The sequence spans 318 residues: Aspartate carbamoyltransferase catalytic subunit (318 aa).

The carbamoyl phosphate site is built by Arg-64 and Thr-65. L-aspartate is bound at residue Lys-92. 3 residues coordinate carbamoyl phosphate: Arg-114, His-142, and Gln-145. L-aspartate-binding residues include Arg-175 and Arg-229. The carbamoyl phosphate site is built by Gly-270 and Pro-271.

It belongs to the aspartate/ornithine carbamoyltransferase superfamily. ATCase family. As to quaternary structure, heterododecamer (2C3:3R2) of six catalytic PyrB chains organized as two trimers (C3), and six regulatory PyrI chains organized as three dimers (R2).

It catalyses the reaction carbamoyl phosphate + L-aspartate = N-carbamoyl-L-aspartate + phosphate + H(+). It functions in the pathway pyrimidine metabolism; UMP biosynthesis via de novo pathway; (S)-dihydroorotate from bicarbonate: step 2/3. Its function is as follows. Catalyzes the condensation of carbamoyl phosphate and aspartate to form carbamoyl aspartate and inorganic phosphate, the committed step in the de novo pyrimidine nucleotide biosynthesis pathway. This is Aspartate carbamoyltransferase catalytic subunit from Rhodospirillum centenum (strain ATCC 51521 / SW).